The chain runs to 150 residues: Arginine repressor (150 aa).

Belongs to the ArgR family.

The protein localises to the cytoplasm. Its pathway is amino-acid biosynthesis; L-arginine biosynthesis [regulation]. In terms of biological role, regulates arginine biosynthesis genes. This is Arginine repressor from Clostridium kluyveri (strain NBRC 12016).